The primary structure comprises 167 residues: Ribosome maturation factor RimM (167 aa).

The PRC barrel domain occupies 94-165 (ENEYYYSDII…KIIITPMEGL (72 aa)).

Belongs to the RimM family. In terms of assembly, binds ribosomal protein uS19.

The protein localises to the cytoplasm. In terms of biological role, an accessory protein needed during the final step in the assembly of 30S ribosomal subunit, possibly for assembly of the head region. Essential for efficient processing of 16S rRNA. May be needed both before and after RbfA during the maturation of 16S rRNA. It has affinity for free ribosomal 30S subunits but not for 70S ribosomes. The sequence is that of Ribosome maturation factor RimM from Staphylococcus aureus (strain bovine RF122 / ET3-1).